The following is a 109-amino-acid chain: Small ribosomal subunit protein bS6 (109 aa).

It belongs to the bacterial ribosomal protein bS6 family.

Functionally, binds together with bS18 to 16S ribosomal RNA. The chain is Small ribosomal subunit protein bS6 from Ehrlichia canis (strain Jake).